Here is a 4239-residue protein sequence, read N- to C-terminus: Tenellin synthetase (4239 aa).

In terms of domain architecture, Ketosynthase family 3 (KS3) spans 15-454 (SEPIAIIGSA…GTNAHAIIER (440 aa)). Residues cysteine 189, histidine 326, and histidine 374 each act as for beta-ketoacyl synthase activity in the active site. A malonyl-CoA:ACP transacylase (MAT) domain region spans residues 589 to 923 (VFTGQGAQWP…ANDAVAFSTA (335 aa)). The segment at 993–1135 (HELLGRRTPD…GRIAVQLGAK (143 aa)) is N-terminal hotdog fold. The dehydratase (DH) domain stretch occupies residues 993–1310 (HELLGRRTPD…GFEVRAVGEP (318 aa)). In terms of domain architecture, PKS/mFAS DH spans 993 to 1313 (HELLGRRTPD…VRAVGEPDAS (321 aa)). The Proton acceptor; for dehydratase activity role is filled by histidine 1025. The tract at residues 1158–1313 (LQQLDCEKLY…VRAVGEPDAS (156 aa)) is C-terminal hotdog fold. Aspartate 1217 (proton donor; for dehydratase activity) is an active-site residue. Positions 1459–1652 (RLYTEDKGMH…FSGVDHIVHD (194 aa)) are methyltransferase (MT) domain. The tract at residues 2209-2382 (TYLMVGAAGG…AASIIHVGHV (174 aa)) is ketoreductase (KR) domain. The Carrier 1 domain occupies 2502–2582 (EAAVAALKGF…QLSALAAKLA (81 aa)). Residue serine 2542 is modified to O-(pantetheine 4'-phosphoryl)serine. 2 disordered regions span residues 2587–2629 (KKRA…EIAQ) and 2642–2712 (LEAS…FFTQ). Polar residues-rich tracts occupy residues 2648–2662 (GGSSTANLTTSSSVS) and 2670–2681 (ESTLQSSDNNGE). A compositionally biased stretch (low complexity) spans 2682-2698 (STPSKSSNCNSDSGSDN). Residues 2723–3169 (REAPMSPAQS…SAQSVGDCVV (447 aa)) are condensation (C) domain. The segment at 3203–3614 (CQQHSTKSAI…DGTLLCFGRI (412 aa)) is adenylation (A) (KR) domain. A disordered region spans residues 3728-3752 (EAAAATSPSNNNINNNTPSGGGGEK). Residues 3729–3745 (AAAATSPSNNNINNNTP) show a composition bias toward low complexity. Residues 3751-3835 (EKMTVRQGEL…GMARCVAEQR (85 aa)) form the Carrier 2 domain. At serine 3795 the chain carries O-(pantetheine 4'-phosphoryl)serine. The segment at 3862–3892 (EKLQHSSASSSSSSSSSSSAGSSSTQRPRKT) is disordered. A compositionally biased stretch (low complexity) spans 3867–3885 (SSASSSSSSSSSSSAGSSS). The interval 3899–4145 (LTGATGFLGG…LDFGQVDKVV (247 aa)) is reductase (RED) domain.

It in the C-terminal section; belongs to the NRP synthetase family.

It participates in secondary metabolite biosynthesis. In terms of biological role, hybrid PKS-NRPS synthetase; part of the gene cluster that mediates the biosynthesis of tenellin-type 2-pyridones, iron-chelating compounds involved in iron stress tolerance, competition with the natural competitor fungus Metarhizium robertsii and insect hosts infection. TenS catalyzes the assembly of the polyketide-amino acid backbone. Because tenS lacks a designated enoylreductase (ER) domain, the required activity is provided the enoyl reductase tenC. Upon formation of the polyketide backbone on the thiotemplate, the triketide is transferred to the NRPS module and linked to tyrosine to produce the pyrrolidine-2-dione intermediates, including pretellinin A, 11-hydropretellenin A, 12-hydropretellenin A, 13-hydropretellenin A, 14-hydropretellenin A, 12-oxopretellenin A and prototellinin D. The pathway begins with the assembly of the polyketide-amino acid backbone by the hybrid PKS-NRPS tenS with the help of the enoyl reductase tenC. These enzymes catalyze the synthesis of the pyrrolidine-2-dione intermediates pretellinin A, 11-hydropretellenin A, 12-hydropretellenin A, 13-hydropretellenin A, 14-hydropretellenin A, 12-oxopretellenin A and prototellinin D. The cytochrome P450 monooxygenase tenA then catalyzes an oxidative ring expansion of pretenellin A and 14-hydropretellenin A to form the 2-pyridone core, leading to pretenellin B and pyridovericin, respectively. The cytochrome P450 monooxygenase tenB is then required for the selective N-hydroxylation of the 2-pyridone nitrogen of yield tellinin and 15-hydroxytellenin (15-HT), respectively. The UDP-glucosyltransferase GT1 and the methyltransferase MT1, located outside the tenS gene cluster, contribute to the stepwise glycosylation and methylation of 15-HT to obtain the glycoside pyridovericin-N-O-(4-O-methyl-beta-D-glucopyranoside) (PMGP). Additional related compounds such as 1-O-methyl-15-HT, (8Z)-1-O-methyl-15-HT, and O-methyltenellin A are also produced but the enzymes involved in their biosynthesis have still to be determined. This is Tenellin synthetase from Beauveria bassiana (White muscardine disease fungus).